The following is a 373-amino-acid chain: PqqA peptide cyclase (373 aa).

One can recognise a Radical SAM core domain in the interval 9 to 224; that stretch reads LTKPRWLLAE…QSYKEKVKGR (216 aa). [4Fe-4S] cluster is bound by residues C23, C27, and C30.

Belongs to the radical SAM superfamily. PqqE family. As to quaternary structure, interacts with PqqD. The interaction is necessary for activity of PqqE. Requires [4Fe-4S] cluster as cofactor.

The catalysed reaction is [PQQ precursor protein] + S-adenosyl-L-methionine = E-Y cross-linked-[PQQ precursor protein] + 5'-deoxyadenosine + L-methionine + H(+). It participates in cofactor biosynthesis; pyrroloquinoline quinone biosynthesis. In terms of biological role, catalyzes the cross-linking of a glutamate residue and a tyrosine residue in the PqqA protein as part of the biosynthesis of pyrroloquinoline quinone (PQQ). The chain is PqqA peptide cyclase from Methylococcus capsulatus (strain ATCC 33009 / NCIMB 11132 / Bath).